Consider the following 269-residue polypeptide: tRNA uridine(34) hydroxylase (269 aa).

The 94-residue stretch at 121 to 214 (SQPDVLVIDT…YLERTHNKNG (94 aa)) folds into the Rhodanese domain. C174 functions as the Cysteine persulfide intermediate in the catalytic mechanism.

Belongs to the TrhO family.

It carries out the reaction uridine(34) in tRNA + AH2 + O2 = 5-hydroxyuridine(34) in tRNA + A + H2O. Its function is as follows. Catalyzes oxygen-dependent 5-hydroxyuridine (ho5U) modification at position 34 in tRNAs. In Wolbachia sp. subsp. Brugia malayi (strain TRS), this protein is tRNA uridine(34) hydroxylase.